A 185-amino-acid chain; its full sequence is Ribosome-recycling factor (185 aa).

The protein belongs to the RRF family.

It is found in the cytoplasm. Responsible for the release of ribosomes from messenger RNA at the termination of protein biosynthesis. May increase the efficiency of translation by recycling ribosomes from one round of translation to another. This is Ribosome-recycling factor from Edwardsiella ictaluri (strain 93-146).